We begin with the raw amino-acid sequence, 103 residues long: uncharacterized protein (103 aa).

A helical transmembrane segment spans residues 33 to 57 (GYVAAIVAGPVSMSPLDWICPLLAI).

The protein localises to the membrane. This is an uncharacterized protein from Sinorhizobium fredii (strain NBRC 101917 / NGR234).